The following is a 338-amino-acid chain: Probable G-protein coupled receptor 160 (338 aa).

The Extracellular segment spans residues 1-23; the sequence is MTALSSENCSFQYQLRQTNQPLD. N-linked (GlcNAc...) asparagine glycosylation is present at N8. A helical membrane pass occupies residues 24-44; that stretch reads VNYLLFLIILGKILLNILTLG. Over 45 to 58 the chain is Cytoplasmic; the sequence is MRRKNTCQNFMEYF. A helical membrane pass occupies residues 59 to 79; it reads CISLAFVDLLLLVNISIILYF. The Extracellular segment spans residues 80–93; it reads RDFVLLSIRFTKYH. Residues 94–114 traverse the membrane as a helical segment; it reads ICLFTQIISFTYGFLHYPVFL. Topologically, residues 115 to 136 are cytoplasmic; it reads TACIDYCLNFSKTTKLSFKCQK. Residues 137–157 traverse the membrane as a helical segment; the sequence is LFYFFTVILIWISVLAYVLGD. Residues 158–177 lie on the Extracellular side of the membrane; the sequence is PAIYQSLKAQNAYSRHCPFY. A helical transmembrane segment spans residues 178 to 198; the sequence is VSIQSYWLSFFMVMILFVAFI. Over 199-244 the chain is Cytoplasmic; it reads TCWEEVTTLVQAIRITSYMNETILYFPFSSHSSYTVRSKKIFLSKL. A helical transmembrane segment spans residues 245 to 265; that stretch reads IVCFLSTWLPFVLLQVIIVLL. The Extracellular portion of the chain corresponds to 266–268; it reads KVQ. The chain crosses the membrane as a helical span at residues 269–289; sequence IPAYIEMNIPWLYFVNSFLIA. Residues 290–338 are Cytoplasmic-facing; sequence TVYWFNCHKLNLKDIGLPLDPFVNWKCCFIPLTIPNLEQIEKPISIMIC.

It belongs to the G-protein coupled receptor 1 family.

The protein localises to the cell membrane. In terms of biological role, orphan receptor. In Homo sapiens (Human), this protein is Probable G-protein coupled receptor 160 (GPR160).